A 191-amino-acid polypeptide reads, in one-letter code: uncharacterized protein (191 aa).

This is an uncharacterized protein from Arabidopsis thaliana (Mouse-ear cress).